The chain runs to 278 residues: Probable cytochrome c oxidase subunit 3 (278 aa).

6 consecutive transmembrane segments (helical) span residues 21 to 41 (PWPILTSFALLLLVIGGISSM), 46 to 66 (FNMYILSAGVISVIYCLYSWW), 89 to 109 (IGMVLFILTETVFFSVFFASF), 174 to 194 (CVTALAFTIVLGIFFTLMQVY), 212 to 232 (FYLATGFHGAHVVIGTIFLIV), and 256 to 276 (AWYWHFVDVVWLFLFTFVYIL).

Belongs to the cytochrome c oxidase subunit 3 family.

The protein localises to the cell membrane. It carries out the reaction 4 Fe(II)-[cytochrome c] + O2 + 8 H(+)(in) = 4 Fe(III)-[cytochrome c] + 2 H2O + 4 H(+)(out). This Rickettsia prowazekii (strain Madrid E) protein is Probable cytochrome c oxidase subunit 3 (ctaE).